A 245-amino-acid chain; its full sequence is Thiopurine S-methyltransferase (245 aa).

Phosphoserine is present on Ser-14. S-adenosyl-L-methionine is bound at residue Trp-29 to Phe-40. Residue Phe-40 participates in substrate binding. Lys-58 is subject to N6-acetyllysine. Residues Leu-69, Glu-90, Ser-134–Ile-135, and Arg-152 each bind S-adenosyl-L-methionine.

It belongs to the class I-like SAM-binding methyltransferase superfamily. TPMT family. As to quaternary structure, monomer.

It localises to the cytoplasm. The enzyme catalyses S-adenosyl-L-methionine + a thiopurine = S-adenosyl-L-homocysteine + a thiopurine S-methylether.. The sequence is that of Thiopurine S-methyltransferase (TPMT) from Pongo pygmaeus (Bornean orangutan).